A 218-amino-acid polypeptide reads, in one-letter code: Sodium channel regulatory subunit beta-1 (218 aa).

A signal peptide spans 1–18; sequence MGTLLAFVVGAALVSSAW. The Extracellular portion of the chain corresponds to 19-157; that stretch reads GGCVEVDSET…DKANRDMASI (139 aa). Disulfide bonds link C21-C43 and C40-C121. The Ig-like C2-type domain occupies 22–150; it reads VEVDSETEAV…KIHLEVVDKA (129 aa). Residues N93, N110, N114, and N135 are each glycosylated (N-linked (GlcNAc...) asparagine). The chain crosses the membrane as a helical span at residues 158–179; that stretch reads VSEIMMYVLIVVLTIWLVAEMV. The Cytoplasmic portion of the chain corresponds to 180–218; the sequence is YCYKKIAAATEAAAQENASEYLAITSESKENCTGVQVAE.

Belongs to the sodium channel auxiliary subunit SCN1B (TC 8.A.17) family. As to quaternary structure, a voltage-gated sodium (Nav) channel consists of an ion-conducting pore-forming alpha subunit functional on its own that is regulated by one or more beta subunits. Interacts with SCN1A; regulatory subunit of SCN1A/Nav1.1. Interacts with SCN3A; regulatory subunit of SCN3A/Nav1.3. Interacts with SCN4A; regulatory subunit of SCN4A/Nav1.4. Interacts with SCN5A; regulatory subunit of SCN5A/Nav1.5. Interacts with SCN8A; regulatory subunit of SCN8A/Nav1.6. Interacts with SCN9A; regulatory subunit of SCN9A/Nav1.7. Interacts with SCN10A; regulatory subunit of SCN10A/Nav1.8. Interacts with NFASC. Interacts with TMEM65.

It localises to the cell membrane. It is found in the perikaryon. Its subcellular location is the cell projection. The protein resides in the axon. Regulatory subunit of multiple voltage-gated sodium (Nav) channels directly mediating the depolarization of excitable membranes. Navs, also called VGSCs (voltage-gated sodium channels) or VDSCs (voltage-dependent sodium channels), operate by switching between closed and open conformations depending on the voltage difference across the membrane. In the open conformation they allow Na(+) ions to selectively pass through the pore, along their electrochemical gradient. The influx of Na+ ions provokes membrane depolarization, initiating the propagation of electrical signals throughout cells and tissues. The accessory beta subunits participate in localization and functional modulation of the Nav channels. Modulates the activity of SCN1A/Nav1.1, SCN2A/Nav1.2, SCN3A/Nav1.3, SCN4A/Nav1.4, SCN5A/Nav1.5, SCN8A/Nav1.6, SCN9A/Nav1.7 and SCN10A/Nav1.8. This Bos taurus (Bovine) protein is Sodium channel regulatory subunit beta-1.